The following is a 228-amino-acid chain: Small ribosomal subunit protein uS3 (228 aa).

The KH type-2 domain maps to 39 to 107; the sequence is VREYLQDKLK…PVHINIEEIR (69 aa).

Belongs to the universal ribosomal protein uS3 family. In terms of assembly, part of the 30S ribosomal subunit. Forms a tight complex with proteins S10 and S14.

In terms of biological role, binds the lower part of the 30S subunit head. Binds mRNA in the 70S ribosome, positioning it for translation. This chain is Small ribosomal subunit protein uS3, found in Pseudomonas syringae pv. syringae (strain B728a).